Here is a 427-residue protein sequence, read N- to C-terminus: Tyrosine--tRNA ligase (427 aa).

Tyr33 contacts L-tyrosine. Residues 38–47 (PTASSLTIGN) carry the 'HIGH' region motif. The L-tyrosine site is built by Tyr168 and Gln172. A 'KMSKS' region motif is present at residues 228–232 (KFGKS). Lys231 is a binding site for ATP. The region spanning 361–427 (LDLLSTLTNS…KKNYYLLRFN (67 aa)) is the S4 RNA-binding domain.

The protein belongs to the class-I aminoacyl-tRNA synthetase family. TyrS type 1 subfamily. Homodimer.

It is found in the cytoplasm. It catalyses the reaction tRNA(Tyr) + L-tyrosine + ATP = L-tyrosyl-tRNA(Tyr) + AMP + diphosphate + H(+). In terms of biological role, catalyzes the attachment of tyrosine to tRNA(Tyr) in a two-step reaction: tyrosine is first activated by ATP to form Tyr-AMP and then transferred to the acceptor end of tRNA(Tyr). The sequence is that of Tyrosine--tRNA ligase from Cytophaga hutchinsonii (strain ATCC 33406 / DSM 1761 / CIP 103989 / NBRC 15051 / NCIMB 9469 / D465).